A 529-amino-acid chain; its full sequence is Peptide chain release factor 3 (529 aa).

The tr-type G domain occupies 11–280 (KKRRTFAIIS…GLVEWAPAPL (270 aa)). GTP contacts are provided by residues 20-27 (SHPDAGKT), 88-92 (DTPGH), and 142-145 (NKLD).

It belongs to the TRAFAC class translation factor GTPase superfamily. Classic translation factor GTPase family. PrfC subfamily.

The protein localises to the cytoplasm. Its function is as follows. Increases the formation of ribosomal termination complexes and stimulates activities of RF-1 and RF-2. It binds guanine nucleotides and has strong preference for UGA stop codons. It may interact directly with the ribosome. The stimulation of RF-1 and RF-2 is significantly reduced by GTP and GDP, but not by GMP. The sequence is that of Peptide chain release factor 3 from Alteromonas mediterranea (strain DSM 17117 / CIP 110805 / LMG 28347 / Deep ecotype).